Reading from the N-terminus, the 513-residue chain is Melianol synthase CYP71BQ4 (513 aa).

The chain crosses the membrane as a helical span at residues 10–30; the sequence is MLHLPSLPVLLSFLLFLLMLI. Cys-451 provides a ligand contact to heme.

This sequence belongs to the cytochrome P450 family. It depends on heme as a cofactor. As to expression, accumulates in mature fruits and in juice vesicles.

Its subcellular location is the membrane. It carries out the reaction dihydroniloticin + 2 reduced [NADPH--hemoprotein reductase] + 2 O2 = melianol + 2 oxidized [NADPH--hemoprotein reductase] + 3 H2O + 2 H(+). It functions in the pathway secondary metabolite biosynthesis; terpenoid biosynthesis. Functionally, monooxygenase involved in the biosynthesis of limonoids triterpene natural products such as limonin, a compound with insecticidal activity responsible for the bitter taste in citrus. Catalyzes the conversion of dihydroniloticin to the protolimonoid melianol. The sequence is that of Melianol synthase CYP71BQ4 from Citrus sinensis (Sweet orange).